The chain runs to 146 residues: Holo-[acyl-carrier-protein] synthase (146 aa).

Positions 9 and 63 each coordinate Mg(2+).

Belongs to the P-Pant transferase superfamily. AcpS family. The cofactor is Mg(2+).

It is found in the cytoplasm. The enzyme catalyses apo-[ACP] + CoA = holo-[ACP] + adenosine 3',5'-bisphosphate + H(+). In terms of biological role, transfers the 4'-phosphopantetheine moiety from coenzyme A to a Ser of acyl-carrier-protein. The protein is Holo-[acyl-carrier-protein] synthase of Burkholderia multivorans (strain ATCC 17616 / 249).